A 419-amino-acid polypeptide reads, in one-letter code: CCA-adding enzyme (419 aa).

2 residues coordinate ATP: Ser54 and Arg57. Residues Ser54 and Arg57 each contribute to the CTP site. Residues Asp66, Asp68, and Asp118 each coordinate Mg(2+). ATP-binding residues include His141, Lys161, and Tyr170. CTP contacts are provided by His141, Lys161, and Tyr170.

The protein belongs to the tRNA nucleotidyltransferase/poly(A) polymerase family. Archaeal CCA-adding enzyme subfamily. In terms of assembly, homodimer. Mg(2+) is required as a cofactor.

The catalysed reaction is a tRNA precursor + 2 CTP + ATP = a tRNA with a 3' CCA end + 3 diphosphate. The enzyme catalyses a tRNA with a 3' CCA end + 2 CTP + ATP = a tRNA with a 3' CCACCA end + 3 diphosphate. Functionally, catalyzes the addition and repair of the essential 3'-terminal CCA sequence in tRNAs without using a nucleic acid template. Adds these three nucleotides in the order of C, C, and A to the tRNA nucleotide-73, using CTP and ATP as substrates and producing inorganic pyrophosphate. tRNA 3'-terminal CCA addition is required both for tRNA processing and repair. Also involved in tRNA surveillance by mediating tandem CCA addition to generate a CCACCA at the 3' terminus of unstable tRNAs. While stable tRNAs receive only 3'-terminal CCA, unstable tRNAs are marked with CCACCA and rapidly degraded. In Pyrobaculum aerophilum (strain ATCC 51768 / DSM 7523 / JCM 9630 / CIP 104966 / NBRC 100827 / IM2), this protein is CCA-adding enzyme.